The primary structure comprises 548 residues: MKLLHGLALVFLLAAASCKADEEITCEENNPFTCSNTDILSSKNFGKDFIFGVASSAYQIEGGRGRGVNVWDGFSHRYPEKAGSDLKNGDTTCESYTRWQKDVDVMGELNATGYRFSFAWSRIIPKGKVSRGVNQGGLDYYHKLIDALLEKNITPFVTLFHWDLPQTLQDEYEGFLDRQIIQDFKDYADLCFKEFGGKVKHWITINQLYTVPTRGYAIGTDAPGRCSPMVDTKHRCYGGNSSTEPYIVAHNQLLAHATVVDLYRTKYKFQKGKIGPVMITRWFLPFDESDPASIEAAERMNQFFHGWYMEPLTKGRYPDIMRQIVGSRLPNFTEEEAELVAGSYDFLGLNYYVTQYAQPKPNPYPSETHTAMMDAGVKLTYDNSRGEFLGPLFVEDKVNGNSYYYPKGIYYVMDYFKTKYGDPLIYVTENGFSTPSSENREQAIADYKRIDYLCSHLCFLRKVIKEKGVNVRGYFAWALGDNYEFCKGFTVRFGLSYVNWEDLDDRNLKESGKWYQRFINGTVKNAVKQDFLRSSLSSQSQKKRFADA.

The signal sequence occupies residues 1–20 (MKLLHGLALVFLLAAASCKA). Disulfide bonds link Cys26/Cys458, Cys34/Cys454, and Cys226/Cys236. Gln59 provides a ligand contact to substrate. 2 residues coordinate Zn(2+): His76 and Asp90. An N-linked (GlcNAc...) asparagine glycan is attached at Asn110. Positions 161 and 206 each coordinate substrate. An L-ascorbate-binding site is contributed by Gln207. The N-linked (GlcNAc...) asparagine glycan is linked to Asn240. Arg281 is an L-ascorbate binding site. N-linked (GlcNAc...) asparagine glycosylation occurs at Asn331. Residue Tyr352 coordinates substrate. The active-site Nucleophile is Glu429. Residues Trp477 and 484–485 (EF) contribute to the substrate site. N-linked (GlcNAc...) asparagine glycosylation occurs at Asn520.

Belongs to the glycosyl hydrolase 1 family. Homodimer. In vacuoles called myrosin grains of a certain class of cells, myrosin cells, distributed in the cotyledons and the axis of the embryo as well as in different organs of the growing plant.

It localises to the vacuole. It carries out the reaction a thioglucoside + H2O = a sugar + a thiol.. Its function is as follows. Degradation of glucosinolates (glucose residue linked by a thioglucoside bound to an amino acid derivative) to glucose, sulfate and any of the products: thiocyanates, isothiocyanates, nitriles, epithionitriles or oxazolidine-2-thiones. In Brassica napus (Rape), this protein is Myrosinase.